The sequence spans 291 residues: Protease HtpX homolog (291 aa).

2 helical membrane passes run 4–24 (IVLF…TMRL) and 39–59 (TSLL…SLAI). Residue H145 participates in Zn(2+) binding. The active site involves E146. H149 provides a ligand contact to Zn(2+). 2 consecutive transmembrane segments (helical) span residues 156-176 (VTLA…SRII) and 195-215 (FFVT…IIVM). Residue E222 coordinates Zn(2+).

It belongs to the peptidase M48B family. It depends on Zn(2+) as a cofactor.

It localises to the cell inner membrane. The protein is Protease HtpX homolog of Thiobacillus denitrificans (strain ATCC 25259 / T1).